Reading from the N-terminus, the 350-residue chain is Fe(3+) ions import ATP-binding protein FbpC (350 aa).

In terms of domain architecture, ABC transporter spans 4 to 236 (LDIINLSKSF…PNDEQTAHFL (233 aa)). 36–43 (GPSGSGKT) contacts ATP.

The protein belongs to the ABC transporter superfamily. Fe(3+) ion importer (TC 3.A.1.10) family. As to quaternary structure, the complex is composed of two ATP-binding proteins (FbpC), two transmembrane proteins (FbpB) and a solute-binding protein (FbpA).

It localises to the cell inner membrane. The enzyme catalyses Fe(3+)(out) + ATP + H2O = Fe(3+)(in) + ADP + phosphate + H(+). Part of the ABC transporter complex FbpABC involved in Fe(3+) ions import. Responsible for energy coupling to the transport system. This Pseudomonas fluorescens (strain Pf0-1) protein is Fe(3+) ions import ATP-binding protein FbpC.